Reading from the N-terminus, the 227-residue chain is UPF0173 metal-dependent hydrolase SSO0099 (227 aa).

Belongs to the UPF0173 family.

The polypeptide is UPF0173 metal-dependent hydrolase SSO0099 (Saccharolobus solfataricus (strain ATCC 35092 / DSM 1617 / JCM 11322 / P2) (Sulfolobus solfataricus)).